The primary structure comprises 169 residues: uncharacterized protein (169 aa).

The 129-residue stretch at 35 to 163 (LIGRGTFILL…PYCPDSLQAL (129 aa)) folds into the Nudix hydrolase domain. A Nudix box motif is present at residues 81-103 (YADSAARELEEELGIRDAVLREH). Glu88 and Glu92 together coordinate Mg(2+).

This sequence belongs to the Nudix hydrolase family. Mg(2+) serves as cofactor.

This is an uncharacterized protein from Pseudomonas aeruginosa (strain ATCC 15692 / DSM 22644 / CIP 104116 / JCM 14847 / LMG 12228 / 1C / PRS 101 / PAO1).